We begin with the raw amino-acid sequence, 239 residues long: DNA repair protein RecO (239 aa).

The protein belongs to the RecO family.

Its function is as follows. Involved in DNA repair and RecF pathway recombination. This chain is DNA repair protein RecO, found in Cereibacter sphaeroides (strain KD131 / KCTC 12085) (Rhodobacter sphaeroides).